The sequence spans 242 residues: MLKLIKDSLGKFNLTLTDKQIEDIAFFLEEIYHSNQLFNLTGYKTKELIAEMLGVKTILLAQSLSYIFSNQSLNVIDIGTGAGIPGLIIKIIYPQLNVYLVDSNAKKITFINEVIKKLNFTGVFAILSRVEDNFFLKKYHGYFDYVFSQAVSKIAVLNELGTQLLKINGQIIHFKSRDYQEEIEFAKKHLSDLGLAFNNLYHYQFNSYFLVNVFYNKKAIAPQKYPREWSKIKRELIDDAKH.

S-adenosyl-L-methionine-binding positions include glycine 79, 130 to 131 (VE), and glutamine 149.

It belongs to the methyltransferase superfamily. RNA methyltransferase RsmG family.

The protein localises to the cytoplasm. Its function is as follows. Specifically methylates the N7 position of a guanine in 16S rRNA. The polypeptide is Ribosomal RNA small subunit methyltransferase G (Mycoplasmoides gallisepticum (strain R(low / passage 15 / clone 2)) (Mycoplasma gallisepticum)).